Here is a 531-residue protein sequence, read N- to C-terminus: MALLPVGIRFIISFSRDQWYRAFIFMLTFLLYASFHLSRKPISIVKGELHKQCTAGDGPESPFSDPSSSTRHGPTHWLLNNETDCGWAPFDKNNYQQLLGALDYAFLCAYAIGMYLSGIIGERLPIRYYLTFGMLASGAFTALFGLGYFYNIHSLGFYVVTQIINGLVQTTGWPSVVTCLSNWFGKGRRGLIMGIWNSHTSVGNILGSLIAGYWVSTCWGLSFIVPGAIVAAMGIVCFLFLIEHPKDVKCSSTLPTHPRASENGINRFRLQKQTTYSEKNGPLDPELQCLLLSDGKNPLHPSHIVVLPADGNMAAISFTGALRIPGVIEFSLCLLFAKLVSYTFLFWLPLYITSVDHLDAKKAGELSTLFDVGGIFGGILAGVISDRLEKRASTCGLMLLLAAPTLYVFSSVSRMGLEATIAMLLLSGALVSGPYALITTAVSADLGTHKSLKGNSHALSTVTAIIDGTGSVGAALGPLLAGLISPSGWSNVFYMLMFADACALLFLVRLIHKELSCPGPAAGIQAPLKEH.

Residues 18–38 traverse the membrane as a helical segment; sequence QWYRAFIFMLTFLLYASFHLS. The interval 53-72 is disordered; sequence CTAGDGPESPFSDPSSSTRH. Transmembrane regions (helical) follow at residues 100 to 120, 129 to 149, 157 to 177, 192 to 214, 222 to 242, 332 to 352, 364 to 384, 392 to 412, 419 to 439, 464 to 484, and 488 to 508; these read GALD…SGII, YLTF…LGYF, FYVV…PSVV, IMGI…AGYW, SFIV…LFLI, LCLL…PLYI, GELS…AGVI, ASTC…FSSV, ATIA…ALIT, AIID…AGLI, and GWSN…LFLV.

The protein belongs to the major facilitator superfamily. Organophosphate:Pi antiporter (OPA) (TC 2.A.1.4) family.

The protein resides in the endoplasmic reticulum membrane. It catalyses the reaction D-glucose 6-phosphate(in) + phosphate(out) = D-glucose 6-phosphate(out) + phosphate(in). Its activity is regulated as follows. Inhibited by vanadate but not by chlorogenic acid. Functionally, inorganic phosphate and glucose-6-phosphate antiporter. May transport cytoplasmic glucose-6-phosphate into the lumen of the endoplasmic reticulum and translocate inorganic phosphate into the opposite direction. Independent of a lumenal glucose-6-phosphatase. May not play a role in homeostatic regulation of blood glucose levels. This Mus musculus (Mouse) protein is Glucose-6-phosphate exchanger SLC37A1.